The primary structure comprises 353 residues: Pupal cuticle protein PCP52 (353 aa).

The N-terminal stretch at 1–15 (MRVLILSAFIACATA) is a signal peptide. Residues 166–195 (AEAPEGNKDEGNKDSVQVESSATESESDKA) form a disordered region. A compositionally biased stretch (polar residues) spans 179–189 (DSVQVESSATE).

Component of the cuticle of the pupa of Galleria mellonella. This Galleria mellonella (Greater wax moth) protein is Pupal cuticle protein PCP52 (PCP52).